We begin with the raw amino-acid sequence, 121 residues long: Small ribosomal subunit protein bS16m (121 aa).

Belongs to the bacterial ribosomal protein bS16 family. As to quaternary structure, component of the mitochondrial small ribosomal subunit (mt-SSU). Mature yeast 74S mitochondrial ribosomes consist of a small (37S) and a large (54S) subunit. The 37S small subunit contains a 15S ribosomal RNA (15S mt-rRNA) and 34 different proteins. The 54S large subunit contains a 21S rRNA (21S mt-rRNA) and 46 different proteins.

Its subcellular location is the mitochondrion. Component of the mitochondrial ribosome (mitoribosome), a dedicated translation machinery responsible for the synthesis of mitochondrial genome-encoded proteins, including at least some of the essential transmembrane subunits of the mitochondrial respiratory chain. The mitoribosomes are attached to the mitochondrial inner membrane and translation products are cotranslationally integrated into the membrane. The sequence is that of Small ribosomal subunit protein bS16m (MRPS16) from Saccharomyces cerevisiae (strain ATCC 204508 / S288c) (Baker's yeast).